The chain runs to 296 residues: NAD kinase (296 aa).

The active-site Proton acceptor is the aspartate 78. Residues 78 to 79 (DG), 152 to 153 (ND), arginine 180, aspartate 182, and glutamine 251 contribute to the NAD(+) site.

This sequence belongs to the NAD kinase family. Requires a divalent metal cation as cofactor.

Its subcellular location is the cytoplasm. The enzyme catalyses NAD(+) + ATP = ADP + NADP(+) + H(+). Its function is as follows. Involved in the regulation of the intracellular balance of NAD and NADP, and is a key enzyme in the biosynthesis of NADP. Catalyzes specifically the phosphorylation on 2'-hydroxyl of the adenosine moiety of NAD to yield NADP. This is NAD kinase from Neisseria meningitidis serogroup C (strain 053442).